Reading from the N-terminus, the 180-residue chain is Large ribosomal subunit protein uL5c (180 aa).

It belongs to the universal ribosomal protein uL5 family. As to quaternary structure, part of the 50S ribosomal subunit; contacts the 5S rRNA.

The protein resides in the plastid. It localises to the chloroplast. Binds 5S rRNA, forms part of the central protuberance of the 50S subunit. This Oltmannsiellopsis viridis (Marine flagellate) protein is Large ribosomal subunit protein uL5c (rpl5).